We begin with the raw amino-acid sequence, 531 residues long: MLSRSGSQGRRCLATLSQIAYQRNDDDEEEAARERRRRARQERLRQKQEEESLGQVTDQVEAHVQNSAPDEESKPATANAQVEGDEEAALLERLARREERRQKRLQEALERQKEFDPTITDGSLSVPSRRMQNNSAENETAEGEEKGESRSGRYEMEETEVVITSYQKNSYQDAEDKKKEEKEEEEEEEKLKGGNLGENQIKDEKIKKDKEPKEEVKNFLDRKKGFTEVKAQNGEFMTHKLKQTENAFSPSRSGGRASGDKEAEGAPQVEAGKRLEELRRRRGETESEEFEKLKQKQQEAALELEELKKKREERRKVLEEEEQRRKQEEADRKAREEEEKRRLKEEIERRRAEAAEKRQKMPEDGLSEDKKPFKCFTPKGSSLKIEERAEFLNKSVQKSGVKSTHQAAVVSKIDSRLEQYTNAIEGTKASKPMKPAASDLPVPAEGVRNIKSMWEKGSVFSSPSASGTPNKETAGLKVGVSSRINEWLTKSPDGNKSPAPKPSDLRPGDVSGKRNLWEKQSVDKVTSPTKV.

The tract at residues 20–200 (AYQRNDDDEE…LKGGNLGENQ (181 aa)) is myosin and calmodulin-binding. The tract at residues 21–379 (YQRNDDDEEE…KKPFKCFTPK (359 aa)) is disordered. A compositionally biased stretch (basic and acidic residues) spans 41–50 (QERLRQKQEE). The span at 54 to 68 (GQVTDQVEAHVQNSA) shows a compositional bias: polar residues. A compositionally biased stretch (basic and acidic residues) spans 93 to 116 (RLARREERRQKRLQEALERQKEFD). The segment covering 120 to 133 (TDGSLSVPSRRMQN) has biased composition (polar residues). A Phosphoserine modification is found at Ser-123. Positions 143 to 156 (GEEKGESRSGRYEM) are enriched in basic and acidic residues. Residues 162–172 (VITSYQKNSYQ) are compositionally biased toward polar residues. The segment covering 200–227 (QIKDEKIKKDKEPKEEVKNFLDRKKGFT) has biased composition (basic and acidic residues). Ser-249 is modified (phosphoserine; by CDK1). Composition is skewed to basic and acidic residues over residues 271 to 297 (AGKR…KQKQ) and 305 to 372 (EELK…DKKP). Positions 303–360 (ELEELKKKREERRKVLEEEEQRRKQEEADRKAREEEEKRRLKEEIERRRAEAAEKRQK) are tropomyosin-binding. A Phosphoserine modification is found at Ser-382. A Glycyl lysine isopeptide (Lys-Gly) (interchain with G-Cter in SUMO2) cross-link involves residue Lys-384. Positions 392-424 (LNKSVQKSGVKSTHQAAVVSKIDSRLEQYTNAI) are strong actin-binding. Ser-395 carries the post-translational modification Phosphoserine. A tropomyosin-binding region spans residues 402 to 412 (KSTHQAAVVSK). The interval 454–460 (WEKGSVF) is calmodulin-binding. The disordered stretch occupies residues 458–531 (SVFSSPSASG…VDKVTSPTKV (74 aa)). Polar residues predominate over residues 459–471 (VFSSPSASGTPNK). Ser-462 bears the Phosphoserine; by CDK1 mark. A Phosphothreonine; by CDK1 modification is found at Thr-468. A phosphoserine; by CDK1 mark is found at Ser-491 and Ser-497. Residues 503–522 (SDLRPGDVSGKRNLWEKQSV) show a composition bias toward basic and acidic residues. The interval 506-531 (RPGDVSGKRNLWEKQSVDKVTSPTKV) is weak actin-binding. Residue Ser-527 is modified to Phosphoserine; by CDK1.

The protein belongs to the caldesmon family. In non-muscle cells, phosphorylation by CDK1 during mitosis causes caldesmon to dissociate from microfilaments. Phosphorylation reduces caldesmon binding to actin, myosin, and calmodulin as well as its inhibition of actomyosin ATPase activity. Phosphorylation also occurs in both quiescent and dividing smooth muscle cells with similar effects on the interaction with actin and calmodulin and on microfilaments reorganization. CDK1-mediated phosphorylation promotes Schwann cell migration during peripheral nerve regeneration. In terms of tissue distribution, high-molecular-weight caldesmon (h-caldesmon) is predominantly expressed in smooth muscles, whereas low-molecular-weight caldesmon (l-caldesmon) is widely distributed in non-muscle tissues and cells. Not expressed in skeletal muscle or heart.

Its subcellular location is the cytoplasm. It localises to the cytoskeleton. The protein localises to the myofibril. It is found in the stress fiber. Actin- and myosin-binding protein implicated in the regulation of actomyosin interactions in smooth muscle and nonmuscle cells (could act as a bridge between myosin and actin filaments). Stimulates actin binding of tropomyosin which increases the stabilization of actin filament structure. In muscle tissues, inhibits the actomyosin ATPase by binding to F-actin. This inhibition is attenuated by calcium-calmodulin and is potentiated by tropomyosin. Interacts with actin, myosin, two molecules of tropomyosin and with calmodulin. Also plays an essential role during cellular mitosis and receptor capping. Involved in Schwann cell migration during peripheral nerve regeneration. In Rattus norvegicus (Rat), this protein is Non-muscle caldesmon (Cald1).